The sequence spans 215 residues: UPF0441 protein SG0265 (215 aa).

The protein belongs to the UPF0441 family.

The chain is UPF0441 protein SG0265 from Sodalis glossinidius (strain morsitans).